A 135-amino-acid polypeptide reads, in one-letter code: ATP synthase epsilon chain, chloroplastic (135 aa).

This sequence belongs to the ATPase epsilon chain family. F-type ATPases have 2 components, CF(1) - the catalytic core - and CF(0) - the membrane proton channel. CF(1) has five subunits: alpha(3), beta(3), gamma(1), delta(1), epsilon(1). CF(0) has three main subunits: a, b and c.

Its subcellular location is the plastid. It localises to the chloroplast thylakoid membrane. Its function is as follows. Produces ATP from ADP in the presence of a proton gradient across the membrane. This Stigeoclonium helveticum (Green alga) protein is ATP synthase epsilon chain, chloroplastic.